The primary structure comprises 208 residues: Ribosomal RNA large subunit methyltransferase E (208 aa).

S-adenosyl-L-methionine contacts are provided by glycine 62, tryptophan 64, aspartate 82, aspartate 98, and aspartate 123. Lysine 163 serves as the catalytic Proton acceptor.

It belongs to the class I-like SAM-binding methyltransferase superfamily. RNA methyltransferase RlmE family.

It is found in the cytoplasm. The enzyme catalyses uridine(2552) in 23S rRNA + S-adenosyl-L-methionine = 2'-O-methyluridine(2552) in 23S rRNA + S-adenosyl-L-homocysteine + H(+). Specifically methylates the uridine in position 2552 of 23S rRNA at the 2'-O position of the ribose in the fully assembled 50S ribosomal subunit. The chain is Ribosomal RNA large subunit methyltransferase E from Actinobacillus succinogenes (strain ATCC 55618 / DSM 22257 / CCUG 43843 / 130Z).